Consider the following 218-residue polypeptide: Phosphatidylserine decarboxylase proenzyme (218 aa).

Ser-187 serves as the catalytic Schiff-base intermediate with substrate; via pyruvic acid. Ser-187 is subject to Pyruvic acid (Ser); by autocatalysis.

It belongs to the phosphatidylserine decarboxylase family. PSD-A subfamily. In terms of assembly, heterodimer of a large membrane-associated beta subunit and a small pyruvoyl-containing alpha subunit. It depends on pyruvate as a cofactor. Post-translationally, is synthesized initially as an inactive proenzyme. Formation of the active enzyme involves a self-maturation process in which the active site pyruvoyl group is generated from an internal serine residue via an autocatalytic post-translational modification. Two non-identical subunits are generated from the proenzyme in this reaction, and the pyruvate is formed at the N-terminus of the alpha chain, which is derived from the carboxyl end of the proenzyme. The post-translation cleavage follows an unusual pathway, termed non-hydrolytic serinolysis, in which the side chain hydroxyl group of the serine supplies its oxygen atom to form the C-terminus of the beta chain, while the remainder of the serine residue undergoes an oxidative deamination to produce ammonia and the pyruvoyl prosthetic group on the alpha chain.

It localises to the cell membrane. It carries out the reaction a 1,2-diacyl-sn-glycero-3-phospho-L-serine + H(+) = a 1,2-diacyl-sn-glycero-3-phosphoethanolamine + CO2. It functions in the pathway phospholipid metabolism; phosphatidylethanolamine biosynthesis; phosphatidylethanolamine from CDP-diacylglycerol: step 2/2. Its function is as follows. Catalyzes the formation of phosphatidylethanolamine (PtdEtn) from phosphatidylserine (PtdSer). This chain is Phosphatidylserine decarboxylase proenzyme, found in Geobacter sulfurreducens (strain ATCC 51573 / DSM 12127 / PCA).